Reading from the N-terminus, the 737-residue chain is Autophagy-related protein 22 (737 aa).

Residues 115 to 154 (RMSPANAGDNSDSYPYGDDTDGDSSSGLPPPRYPGDDTRP) are disordered. Residues 125–141 (SDSYPYGDDTDGDSSSG) show a composition bias toward low complexity. Helical transmembrane passes span 166–186 (YAFAAEVYVICGIGSFIPILL), 232–252 (SFAMYTFSVSVLLQALLVVSI), 264–284 (KLLLAFAWIGSACVMAYIFIS), and 289–309 (LIGALLAIISNTSFGASFVLL). Positions 327–353 (GDYGSPGYATTEEGDDEDDEYQEDSTR) are disordered. The segment covering 338-349 (EEGDDEDDEYQE) has biased composition (acidic residues). N354 carries N-linked (GlcNAc...) asparagine glycosylation. The helical transmembrane segment at 395–415 (GIGIGYIAGLFLQCVAIAILI) threads the bilayer. N419 is a glycosylation site (N-linked (GlcNAc...) asparagine). The next 7 helical transmembrane spans lie at 426–446 (IVLCVIGAWWAIFTIPAAMWL), 487–507 (LVDIVLFLAGWFLLSDAIATT), 524–544 (WALGMINVISTASGILGAFSW), 559–579 (ILACIALFELIPLYGLMGYLP), 593–613 (WEMYPLAAIYGFVLGGLSGYC), 632–652 (LYAITDKGSSVFGPAIVGAII), and 661–681 (AFWFLAAIVGTPALFIWFINV).

The protein belongs to the ATG22 family.

It is found in the vacuole membrane. In terms of biological role, vacuolar effluxer which mediate the efflux of amino acids resulting from autophagic degradation. The release of autophagic amino acids allows the maintenance of protein synthesis and viability during nitrogen starvation. The sequence is that of Autophagy-related protein 22 (apg-11) from Neurospora crassa (strain ATCC 24698 / 74-OR23-1A / CBS 708.71 / DSM 1257 / FGSC 987).